Here is a 119-residue protein sequence, read N- to C-terminus: Small ribosomal subunit protein uS10 (119 aa).

The protein belongs to the universal ribosomal protein uS10 family. In terms of assembly, component of the 40S small ribosomal subunit.

It localises to the cytoplasm. Functionally, component of the small ribosomal subunit. The ribosome is a large ribonucleoprotein complex responsible for the synthesis of proteins in the cell. The protein is Small ribosomal subunit protein uS10 (rps20) of Xenopus laevis (African clawed frog).